The primary structure comprises 184 residues: NADH-dependent flavin reductase subunit 2 (184 aa).

The protein belongs to the NADH-dependent flavin reductase family. Requires LJ_0548 for activity, but the exact composition of the enzyme is unclear.

It carries out the reaction a reduced flavin + NAD(+) = an oxidized flavin + NADH + 2 H(+). Component of an enzyme that catalyzes the reduction of free flavins (FMN, FAD and riboflavin) by NADH; the reduced flavins produced by this reaction likely spontaneously react with oxygen, yielding hydrogen peroxide. Is responsible for the major H(2)O(2) production in L.johnsonii in the presence of oxygen. Cannot use NADPH instead of NADH as the electron donor. The polypeptide is NADH-dependent flavin reductase subunit 2 (nfr2) (Lactobacillus johnsonii (strain CNCM I-12250 / La1 / NCC 533)).